Consider the following 555-residue polypeptide: Formate--tetrahydrofolate ligase (555 aa).

65–72 (TPAGEGKT) provides a ligand contact to ATP.

This sequence belongs to the formate--tetrahydrofolate ligase family.

It carries out the reaction (6S)-5,6,7,8-tetrahydrofolate + formate + ATP = (6R)-10-formyltetrahydrofolate + ADP + phosphate. It participates in one-carbon metabolism; tetrahydrofolate interconversion. This chain is Formate--tetrahydrofolate ligase, found in Paracoccus denitrificans (strain Pd 1222).